The chain runs to 738 residues: Melanotransferrin (738 aa).

The N-terminal stretch at 1-19 (MRLLSVTFWLLLSLRTVVC) is a signal peptide. 2 consecutive Transferrin-like domains span residues 23–357 (VQWC…GLLC) and 366–706 (LRWC…GMLS). 2 cysteine pairs are disulfide-bonded: Cys26–Cys63 and Cys36–Cys54. Positions 78 and 107 each coordinate Fe(3+). N-linked (GlcNAc...) asparagine glycosylation occurs at Asn118. 4 disulfide bridges follow: Cys130/Cys216, Cys172/Cys189, Cys186/Cys199, and Cys257/Cys271. Hydrogencarbonate is bound at residue Thr132. A glycan (N-linked (GlcNAc...) asparagine) is linked at Asn135. Hydrogencarbonate contacts are provided by Arg136, Val138, and Gly139. Tyr210 is a binding site for Fe(3+). Positions 279 and 451 each coordinate Fe(3+). The residue at position 462 (Ser462) is a Phosphoserine. Asn515 carries an N-linked (GlcNAc...) asparagine glycan. The Fe(3+) site is built by Tyr556 and His625. Residue Cys709 is the site of GPI-anchor amidated cysteine attachment. A propeptide spans 710–738 (SGAGAAVQRVPLLALLLLTLAAGLLPRVL) (removed in mature form).

Belongs to the transferrin family.

The protein localises to the cell membrane. Involved in iron cellular uptake. Seems to be internalized and then recycled back to the cell membrane. Binds a single atom of iron per subunit. Could also bind zinc. This chain is Melanotransferrin (Meltf), found in Mus musculus (Mouse).